The chain runs to 248 residues: Small ribosomal subunit protein uS2 (248 aa).

The protein belongs to the universal ribosomal protein uS2 family.

The chain is Small ribosomal subunit protein uS2 from Thiobacillus denitrificans (strain ATCC 25259 / T1).